An 855-amino-acid polypeptide reads, in one-letter code: Endochitinase 2 (855 aa).

An N-terminal signal peptide occupies residues 1 to 22; the sequence is MGPTNILAAFIAVSSLFIQSLA. The region spanning 29–340 is the GH18 domain; that stretch reads SNLAVYWGQG…DIMKEVLLRC (312 aa). Asn90 is a glycosylation site (N-linked (GlcNAc...) asparagine). The Proton donor role is filled by Glu175. The segment at 341-672 is disordered; that stretch reads DPDPPTSTVT…APSSSTTEDR (332 aa). The span at 346–400 shows a compositional bias: low complexity; it reads TSTVTSTTSASTSTQTSSQSTTMETKTLSASTTPSSPSTVSPSSTMQTTSTGSTS. Positions 401 to 456 are enriched in polar residues; the sequence is IETVTTRSQEPPSTTISTRSASTEPVTTRSQEPPSTTISTRSASTETVTTRSQEPP. A compositionally biased stretch (low complexity) spans 457–483; the sequence is STTISTWSASTETSTSSQDSPSTTIST. The span at 484 to 521 shows a compositional bias: polar residues; sequence KSAPTGTVTTRSQDLPSTTISTRSPETETETATTKSQG. Over residues 522–533 the composition is skewed to low complexity; it reads SPSITLSTRSSS. Residues 534 to 555 are compositionally biased toward polar residues; that stretch reads AETVSTRSQHSSSTTISTKSAP. Residues 556–567 are compositionally biased toward low complexity; that stretch reads TETGTTSEHSTS. The segment covering 568 to 641 has biased composition (polar residues); it reads MPVSTRSAST…SQTPTTIITG (74 aa). 2 stretches are compositionally biased toward low complexity: residues 642-652 and 659-672; these read TPSDPVSAPTT and TLTL…TEDR. Gly826 carries GPI-anchor amidated glycine lipidation. Positions 827 to 855 are cleaved as a propeptide — removed in mature form; it reads SAMTVRSMDVVAKALITAGAAVLGLFLGL.

The protein belongs to the glycosyl hydrolase 18 family. Chitinase class III subfamily.

It localises to the cell membrane. The catalysed reaction is Random endo-hydrolysis of N-acetyl-beta-D-glucosaminide (1-&gt;4)-beta-linkages in chitin and chitodextrins.. May be associated with endosporulation. The sequence is that of Endochitinase 2 (CTS2) from Coccidioides posadasii (strain C735) (Valley fever fungus).